A 592-amino-acid polypeptide reads, in one-letter code: Aspartate--tRNA ligase (592 aa).

Glu173 provides a ligand contact to L-aspartate. The interval 197 to 200 is aspartate; it reads QLFK. Arg219 contacts L-aspartate. Residues 219–221 and Gln228 contribute to the ATP site; that span reads RDE. L-aspartate is bound at residue His448. Glu482 lines the ATP pocket. Arg489 provides a ligand contact to L-aspartate. 534–537 provides a ligand contact to ATP; sequence GLDR.

The protein belongs to the class-II aminoacyl-tRNA synthetase family. Type 1 subfamily. As to quaternary structure, homodimer.

It localises to the cytoplasm. The catalysed reaction is tRNA(Asp) + L-aspartate + ATP = L-aspartyl-tRNA(Asp) + AMP + diphosphate. Functionally, catalyzes the attachment of L-aspartate to tRNA(Asp) in a two-step reaction: L-aspartate is first activated by ATP to form Asp-AMP and then transferred to the acceptor end of tRNA(Asp). The polypeptide is Aspartate--tRNA ligase (Shewanella putrefaciens (strain CN-32 / ATCC BAA-453)).